We begin with the raw amino-acid sequence, 186 residues long: Large ribosomal subunit protein uL15 (186 aa).

Positions 1–48 (MDLSSLRPAKGAVKARKRVGRGPGSGNGTTAGKGNKGQQSRSGYQRPV) are disordered. The segment covering 21 to 35 (RGPGSGNGTTAGKGN) has biased composition (gly residues).

It belongs to the universal ribosomal protein uL15 family. As to quaternary structure, part of the 50S ribosomal subunit.

In terms of biological role, binds to the 23S rRNA. The protein is Large ribosomal subunit protein uL15 of Chlorobaculum tepidum (strain ATCC 49652 / DSM 12025 / NBRC 103806 / TLS) (Chlorobium tepidum).